The chain runs to 473 residues: Anthocyanidin-3-O-glucoside rhamnosyltransferase (473 aa).

It belongs to the UDP-glycosyltransferase family. As to expression, expressed in petals, styles and anthers.

Its pathway is pigment biosynthesis; anthocyanin biosynthesis. Functionally, controls the rhamnosylation of reddish anthocyanidin-3-O-glucosides, which is the first step in a series of modifications that finally yield magenta or blue/purple coloured anthocyanins. Controls the conversion of anthocyanidin-3-O-glucosides to anthocyanidin-3-O-rutinosides. The sequence is that of Anthocyanidin-3-O-glucoside rhamnosyltransferase from Petunia hybrida (Petunia).